The sequence spans 93 residues: Large ribosomal subunit protein uL23 (93 aa).

This sequence belongs to the universal ribosomal protein uL23 family. Part of the 50S ribosomal subunit. Contacts protein L29, and trigger factor when it is bound to the ribosome.

One of the early assembly proteins it binds 23S rRNA. One of the proteins that surrounds the polypeptide exit tunnel on the outside of the ribosome. Forms the main docking site for trigger factor binding to the ribosome. The protein is Large ribosomal subunit protein uL23 of Nitratiruptor sp. (strain SB155-2).